Here is a 286-residue protein sequence, read N- to C-terminus: Cytotoxin (286 aa).

The propeptide occupies 267–286 (TFYNYASLVPDLETRVRSAE).

The protein belongs to the aerolysin family.

It is found in the secreted. In terms of biological role, cytotoxin is thought to form hydrophilic pores in cell membranes. The chain is Cytotoxin (ctx) from Pseudomonas aeruginosa.